Reading from the N-terminus, the 835-residue chain is Beta-galactosidase (835 aa).

The N-terminal stretch at 1 to 22 is a signal peptide; sequence MGFWMAMLLMLLLCLWVSCGIA. Catalysis depends on glutamate 180, which acts as the Proton donor. The Nucleophile role is filled by glutamate 249. Residues 749-835 form the SUEL-type lectin domain; sequence RPLRPKAHLK…KKLSVEAICS (87 aa).

Belongs to the glycosyl hydrolase 35 family.

The catalysed reaction is Hydrolysis of terminal non-reducing beta-D-galactose residues in beta-D-galactosides.. Its function is as follows. Involved in cell wall degradation. Degrades polysaccharides containing beta-(1--&gt;4)-linked galactans, acting as an exo-(1--&gt;4)-beta-D-galactanase. The polypeptide is Beta-galactosidase (Solanum lycopersicum (Tomato)).